Here is a 220-residue protein sequence, read N- to C-terminus: Octanoyltransferase (220 aa).

Residues 34–209 (ENSQDEIWVV…TLSQELGLAN (176 aa)) form the BPL/LPL catalytic domain. Residues 73–80 (RGGQVTYH), 140–142 (SLG), and 153–155 (GLA) each bind substrate. The active-site Acyl-thioester intermediate is the Cys171.

Belongs to the LipB family.

The protein resides in the cytoplasm. The catalysed reaction is octanoyl-[ACP] + L-lysyl-[protein] = N(6)-octanoyl-L-lysyl-[protein] + holo-[ACP] + H(+). It participates in protein modification; protein lipoylation via endogenous pathway; protein N(6)-(lipoyl)lysine from octanoyl-[acyl-carrier-protein]: step 1/2. Catalyzes the transfer of endogenously produced octanoic acid from octanoyl-acyl-carrier-protein onto the lipoyl domains of lipoate-dependent enzymes. Lipoyl-ACP can also act as a substrate although octanoyl-ACP is likely to be the physiological substrate. This Shewanella piezotolerans (strain WP3 / JCM 13877) protein is Octanoyltransferase.